A 522-amino-acid polypeptide reads, in one-letter code: Type-2 serine--tRNA ligase (522 aa).

Residue Ala-319 coordinates L-serine. Cys-321 lines the Zn(2+) pocket. Arg-350 lines the L-serine pocket. Residues Arg-350–Glu-352 and Arg-361–Val-362 contribute to the ATP site. An L-serine-binding site is contributed by Arg-367–Glu-369. The Zn(2+) site is built by Glu-369 and Cys-476. An ATP-binding site is contributed by Arg-483.

This sequence belongs to the class-II aminoacyl-tRNA synthetase family. Type-2 seryl-tRNA synthetase subfamily. Homodimer. The cofactor is Zn(2+).

Its subcellular location is the cytoplasm. The catalysed reaction is tRNA(Ser) + L-serine + ATP = L-seryl-tRNA(Ser) + AMP + diphosphate + H(+). The enzyme catalyses tRNA(Sec) + L-serine + ATP = L-seryl-tRNA(Sec) + AMP + diphosphate + H(+). The protein operates within aminoacyl-tRNA biosynthesis; selenocysteinyl-tRNA(Sec) biosynthesis; L-seryl-tRNA(Sec) from L-serine and tRNA(Sec): step 1/1. Catalyzes the attachment of serine to tRNA(Ser). Is also able to aminoacylate tRNA(Sec) with serine, to form the misacylated tRNA L-seryl-tRNA(Sec), which will be further converted into selenocysteinyl-tRNA(Sec). The sequence is that of Type-2 serine--tRNA ligase (serS) from Methanococcus aeolicus (strain ATCC BAA-1280 / DSM 17508 / OCM 812 / Nankai-3).